The chain runs to 307 residues: Thiohydrolase apmlB (307 aa).

It belongs to the polyketide transferase af380 family.

Its function is as follows. Thiohydrolase; part of the gene cluster that mediates the biosynthesis of phaeospelide A, a fungal polyene macrolide with a 34-membered macrolactone ring and an all-trans conjugated hexaene structure. The HR-PKS ApmlA uses acetyl-CoA and malonyl-CoA as its starter and extender units, respectively, and provides the large carbon framework in phaeospelide via 16 cycles of polyketide chain elongation, which is the largest number identified in fungal iterative PKSs thus far. During round 1, the KR domain reduces beta -ketone to an L-oriented hydroxy group, while during later rounds, it provides hydroxy groups in the D-configuration. The characteristic conjugated hexaene moiety is built during the later rounds (10-15), when the KR and DH domains are at work but ER is off. Phylogenetic analysis of the DH domain suggests that a polyene formation is programmed in the DH domain. Finally, the mature ACP-tethered carbon chain is transferred to the serine residue of the thiohydrolase apmlB, followed by intramolecular macrolactonization, generating phaeospelide A. When one elongation cycle during rounds 7-9 is skipped, phaeospelide B is biosynthesized instead. This Arthrinium phaeospermum (Gymnosporium phaeospermum) protein is Thiohydrolase apmlB.